A 582-amino-acid polypeptide reads, in one-letter code: uncharacterized protein (582 aa).

6 helical membrane-spanning segments follow: residues 17–37, 57–77, 131–151, 156–176, 239–259, and 271–291; these read VAML…LPTV, LGAV…GAVY, MTAT…IMAI, ALTW…YWII, ALML…LIWF, and VGSL…VLMA. Residues 17-300 enclose the ABC transmembrane type-1 domain; it reads VAMLMMLQLV…ATMTLAVLPR (284 aa). Residues 335–571 enclose the ABC transporter domain; the sequence is VRLAGATFTY…CPTYAEFAAS (237 aa). An ATP-binding site is contributed by 369-376; it reads GSTGSGKS.

It belongs to the ABC transporter superfamily.

It localises to the cell membrane. This is an uncharacterized protein from Mycobacterium tuberculosis (strain CDC 1551 / Oshkosh).